Reading from the N-terminus, the 226-residue chain is Acyl-protein thioesterase 1 homolog 1 (226 aa).

Residues Ser-121, Asp-174, and His-206 each act as charge relay system in the active site.

It belongs to the AB hydrolase superfamily. AB hydrolase 2 family.

It localises to the cytoplasm. Its subcellular location is the nucleus. It carries out the reaction S-hexadecanoyl-L-cysteinyl-[protein] + H2O = L-cysteinyl-[protein] + hexadecanoate + H(+). In terms of biological role, hydrolyzes fatty acids from S-acylated cysteine residues in proteins with a strong preference for palmitoylated G-alpha proteins over other acyl substrates. Mediates the deacylation of G-alpha proteins such as GPA1 in vivo, but has weak or no activity toward palmitoylated Ras proteins. Has weak lysophospholipase activity in vitro; however such activity may not exist in vivo. The protein is Acyl-protein thioesterase 1 homolog 1 of Dictyostelium discoideum (Social amoeba).